The following is a 127-amino-acid chain: uncharacterized protein (127 aa).

A signal peptide spans 1–16 (MIKKIIFGIAILLSTS). C17 carries the N-palmitoyl cysteine lipid modification. C17 is lipidated: S-diacylglycerol cysteine. The stretch at 56 to 101 (EVREEIQKYRVAIVKINKKKRELYNRLSKEAQNFLAEQQKYKQKLS) forms a coiled coil. The span at 107 to 118 (VENDQKNNTADS) shows a compositional bias: polar residues. The tract at residues 107–127 (VENDQKNNTADSNDNKSKDTK) is disordered.

It localises to the cell membrane. This is an uncharacterized protein from Rickettsia conorii (strain ATCC VR-613 / Malish 7).